The sequence spans 79 residues: UPF0154 protein llmg_1186 (79 aa).

Residues 4 to 24 (ILAILLMVVCLLAGFFLGTWF) traverse the membrane as a helical segment.

This sequence belongs to the UPF0154 family.

It is found in the cell membrane. The sequence is that of UPF0154 protein llmg_1186 from Lactococcus lactis subsp. cremoris (strain MG1363).